A 298-amino-acid chain; its full sequence is Junctional adhesion molecule A (298 aa).

The N-terminal stretch at 1-28 is a signal peptide; it reads MGTEARAGRRQLLVFTSVVLSSLALGRG. 2 consecutive Ig-like V-type domains span residues 29–126 and 134–227; these read AVYT…VQLT and PTVH…EAVR. Topologically, residues 29–237 are extracellular; the sequence is AVYTSEPDVR…MEAAELNVGG (209 aa). 2 disulfides stabilise this stretch: Cys49/Cys108 and Cys152/Cys211. Asn184 is a glycosylation site (N-linked (GlcNAc...) asparagine). The chain crosses the membrane as a helical span at residues 238-258; the sequence is IVAAVLVTLILLGFLILGIWF. The Cytoplasmic portion of the chain corresponds to 259–298; the sequence is AYRRGYFDRTKKGTSSKKVIYSQPAARSEGEFRQTSSFLV. 2 positions are modified to phosphoserine: Ser280 and Ser286.

This sequence belongs to the immunoglobulin superfamily. In terms of assembly, interacts with the ninth PDZ domain of MPDZ. Interacts with the first PDZ domain of PARD3. The association between PARD3 and PARD6B probably disrupts this interaction. Interacts with ITGAL (via I-domain). Interacts with CD151. (Microbial infection) Interacts with calicivirus capsid protein. As to quaternary structure, (Microbial infection) Interacts with the orthoreovirus sigma-1 capsid protein.

The protein localises to the cell junction. It is found in the tight junction. It localises to the cell membrane. Its function is as follows. Seems to play a role in epithelial tight junction formation. Appears early in primordial forms of cell junctions and recruits PARD3. The association of the PARD6-PARD3 complex may prevent the interaction of PARD3 with JAM1, thereby preventing tight junction assembly. Plays a role in regulating monocyte transmigration involved in integrity of epithelial barrier. Ligand for integrin alpha-L/beta-2 involved in memory T-cell and neutrophil transmigration. Involved in platelet activation. In terms of biological role, (Microbial infection) Acts as a functional receptor for murine norovirus. Functionally, (Microbial infection) In case of orthoreovirus infection, serves as receptor for the virus. This is Junctional adhesion molecule A (F11R) from Felis catus (Cat).